The primary structure comprises 270 residues: NAD(P)H-hydrate epimerase (270 aa).

A YjeF N-terminal domain is found at 25 to 234 (FQQLMDLMQN…DLLAPEAIYQ (210 aa)). 73-77 (DNGGQ) contacts (6S)-NADPHX. Residues asparagine 74 and aspartate 144 each contribute to the K(+) site. Residues 148–154 (GVGLYGH) and glutamate 177 contribute to the (6S)-NADPHX site. Position 180 (threonine 180) interacts with K(+).

This sequence belongs to the NnrE/AIBP family. K(+) serves as cofactor.

The catalysed reaction is (6R)-NADHX = (6S)-NADHX. The enzyme catalyses (6R)-NADPHX = (6S)-NADPHX. Its function is as follows. Catalyzes the epimerization of the S- and R-forms of NAD(P)HX, a damaged form of NAD(P)H that is a result of enzymatic or heat-dependent hydration. This is a prerequisite for the S-specific NAD(P)H-hydrate dehydratase to allow the repair of both epimers of NAD(P)HX. The chain is NAD(P)H-hydrate epimerase from Legionella pneumophila subsp. pneumophila (strain Philadelphia 1 / ATCC 33152 / DSM 7513).